A 981-amino-acid chain; its full sequence is Helicase-like transcription factor CHR28 (981 aa).

Disordered stretches follow at residues 1 to 66 (MDSA…LDSR) and 112 to 194 (KRTH…RNSE). The span at 46–65 (SGSSSGANGHTKTGLTNLDS) shows a compositional bias: polar residues. The segment covering 119 to 128 (FSRPPFPPRP) has biased composition (pro residues). Polar residues predominate over residues 166–176 (HGTSASPSHFN). Over residues 181–194 (PMHRNGIGEERNSE) the composition is skewed to basic and acidic residues. Residues 241–526 (ETNSLHCMGG…YSYFRFLKYD (286 aa)) enclose the Helicase ATP-binding domain. 254-261 (DDQGLGKT) is an ATP binding site. 2 disordered regions span residues 293–337 (DADD…RKFN) and 439–462 (VVGT…SDPD). Over residues 439 to 451 (VVGTTKKSKKKKG) the composition is skewed to basic residues. An RING-type; degenerate zinc finger spans residues 679–718 (CCVCHDPPEDPVVTLCGHIFCYQCVSDYITGDEDTCPAPR). Positions 779 to 798 (NQGTSNSTQNGQMASSSQQP) are enriched in polar residues. The interval 779-808 (NQGTSNSTQNGQMASSSQQPNDDDDDDDDD) is disordered. Residues 799–808 (NDDDDDDDDD) are compositionally biased toward acidic residues. The 173-residue stretch at 804 to 976 (DDDDDVTIVE…ATRLTVDDLK (173 aa)) folds into the Helicase C-terminal domain.

This sequence belongs to the SNF2/RAD54 helicase family. RAD16 subfamily. In terms of assembly, interacts with SUVR2.

Its subcellular location is the nucleus. Probable helicase-like transcription factor involved in transcriptional gene silencing. Associates with SUVR2 and contributes to transcriptional gene silencing at RNA-directed DNA methylation (RdDM) target loci but also at RdDM-independent target loci. May be involved in nucleosome positioning to form ordered nucleosome arrays on chromatin. Associates with SUVR2 and functions redundantly with FRG1. Required for the efficient methylation of a broad range of RdDM target loci. In Arabidopsis thaliana (Mouse-ear cress), this protein is Helicase-like transcription factor CHR28.